Consider the following 336-residue polypeptide: Protein RecA (336 aa).

Glycine 66 to threonine 73 serves as a coordination point for ATP.

It belongs to the RecA family.

Its subcellular location is the cytoplasm. Its function is as follows. Can catalyze the hydrolysis of ATP in the presence of single-stranded DNA, the ATP-dependent uptake of single-stranded DNA by duplex DNA, and the ATP-dependent hybridization of homologous single-stranded DNAs. It interacts with LexA causing its activation and leading to its autocatalytic cleavage. The polypeptide is Protein RecA (Mycoplasma pneumoniae (strain ATCC 29342 / M129 / Subtype 1) (Mycoplasmoides pneumoniae)).